We begin with the raw amino-acid sequence, 55 residues long: uncharacterized protein (55 aa).

Residues 1 to 30 form a disordered region; the sequence is MDKPTVETSAAPVETLVLTEPPAETQAEDS.

This is an uncharacterized protein from Frog virus 3 (isolate Goorha) (FV-3).